Reading from the N-terminus, the 162-residue chain is Crossover junction endodeoxyribonuclease RuvC (162 aa).

Residues D7, E67, and D140 contribute to the active site. Residues D7, E67, and D140 each coordinate Mg(2+).

The protein belongs to the RuvC family. In terms of assembly, homodimer which binds Holliday junction (HJ) DNA. The HJ becomes 2-fold symmetrical on binding to RuvC with unstacked arms; it has a different conformation from HJ DNA in complex with RuvA. In the full resolvosome a probable DNA-RuvA(4)-RuvB(12)-RuvC(2) complex forms which resolves the HJ. It depends on Mg(2+) as a cofactor.

The protein resides in the cytoplasm. The catalysed reaction is Endonucleolytic cleavage at a junction such as a reciprocal single-stranded crossover between two homologous DNA duplexes (Holliday junction).. Functionally, the RuvA-RuvB-RuvC complex processes Holliday junction (HJ) DNA during genetic recombination and DNA repair. Endonuclease that resolves HJ intermediates. Cleaves cruciform DNA by making single-stranded nicks across the HJ at symmetrical positions within the homologous arms, yielding a 5'-phosphate and a 3'-hydroxyl group; requires a central core of homology in the junction. The consensus cleavage sequence is 5'-(A/T)TT(C/G)-3'. Cleavage occurs on the 3'-side of the TT dinucleotide at the point of strand exchange. HJ branch migration catalyzed by RuvA-RuvB allows RuvC to scan DNA until it finds its consensus sequence, where it cleaves and resolves the cruciform DNA. The sequence is that of Crossover junction endodeoxyribonuclease RuvC from Heliobacterium modesticaldum (strain ATCC 51547 / Ice1).